A 546-amino-acid chain; its full sequence is Carboxypeptidase Y homolog A (546 aa).

The first 17 residues, 1–17 (MKLLASTVLVGAAAASI), serve as a signal peptide directing secretion. Positions 18–132 (TPQQQVLQNP…KLEQYNLRAK (115 aa)) are excised as a propeptide. 5 disulfides stabilise this stretch: Cys-186–Cys-426, Cys-320–Cys-334, Cys-344–Cys-367, Cys-351–Cys-360, and Cys-389–Cys-396. A glycan (N-linked (GlcNAc...) asparagine) is linked at Asn-217. Residue Ser-273 is part of the active site. Asp-465 is an active-site residue. N-linked (GlcNAc...) asparagine glycosylation is present at Asn-512. Residue His-523 is part of the active site.

It belongs to the peptidase S10 family.

It is found in the vacuole. The enzyme catalyses Release of a C-terminal amino acid with broad specificity.. Vacuolar carboxypeptidase involved in degradation of small peptides. Digests preferentially peptides containing an aliphatic or hydrophobic residue in P1' position, as well as methionine, leucine or phenylalanine in P1 position of ester substrate. The polypeptide is Carboxypeptidase Y homolog A (CPYA) (Botryotinia fuckeliana (strain B05.10) (Noble rot fungus)).